The following is a 442-amino-acid chain: Matrix remodeling-associated protein 8 (442 aa).

An N-terminal signal peptide occupies residues Met-1–Ala-19. Residues Val-20–Gln-340 are Extracellular-facing. 2 consecutive Ig-like V-type domains span residues Pro-25 to Thr-156 and Pro-159 to Thr-291. Intrachain disulfides connect Cys-53–Cys-136 and Cys-185–Cys-271. The N-linked (GlcNAc...) asparagine glycan is linked to Asn-118. Positions Arg-128–Asp-130 match the RGD 1 motif. A Phosphoserine modification is found at Ser-227. The short motif at Arg-251–Asp-253 is the RGD 2 element. The tract at residues Glu-296–Leu-319 is disordered. N-linked (GlcNAc...) asparagine glycosylation occurs at Asn-305. The chain crosses the membrane as a helical span at residues Leu-341–Ala-361. Residues Thr-362–Lys-442 are Cytoplasmic-facing.

In terms of assembly, homodimer in cis. Does not appear to form trans-homodimers. Interacts with ITGB3; the interaction inhibits ITGAV:ITGB3 heterodimer formation. In terms of tissue distribution, widely expressed (at protein level). Highly expressed in brain where it localizes to the glia limitans, which is formed by the endfeet of astrocytes surrounding capillaries, and beneath the pia mater (at protein level). In lung, detected in epithelial cells of the bronchus (at protein level). Expressed in intercalated disks in the heart (at protein level). Detected in pancreatic alpha-cells in the islet of Langerhans (at protein level). In kidney, found in the brush border of the proximal convoluted tubule (at protein level). Expressed in the epithelium of the small intestine (at protein level). Weakly expressed in liver (at protein level). Detected in myeloid cells.

The protein localises to the cell membrane. It is found in the cell junction. Its subcellular location is the tight junction. The protein resides in the cytoplasm. It localises to the cell projection. The protein localises to the cilium membrane. It is found in the nucleus. In terms of biological role, transmembrane protein which can modulate activity of various signaling pathways, probably via binding to integrin ITGAV:ITGB3. Mediates heterophilic cell-cell interactions in vitro. Inhibits osteoclastogenesis downstream of TNFSF11/RANKL and CSF1, where it may function by attenuating signaling via integrin ITGB3 and MAP kinase p38. Plays a role in cartilage formation where it promotes proliferation and maturation of growth plate chondrocytes. Stimulates formation of primary cilia in chondrocytes. Enhances expression of genes involved in the hedgehog signaling pathway in chondrocytes, including the hedgehog signaling molecule IHH; may also promote signaling via the PTHLH/PTHrP pathway. Plays a role in angiogenesis where it suppresses migration of endothelial cells and also promotes their apoptosis. Inhibits VEGF-induced activation of AKT and p38 MAP kinase in endothelial cells. Also inhibits VTN (vitronectin)-mediated integrin ITGAV:ITGB3 signaling and activation of PTK2/FAK. May play a role in the maturation and maintenance of the blood-brain barrier. The polypeptide is Matrix remodeling-associated protein 8 (Mus musculus (Mouse)).